The primary structure comprises 67 residues: MAVGTVKWFNAEKGYGFIAPEDNSADVFVHFSAIQGNGFKELQENDRVEFETQDGPKGLQAANVTKL.

The CSD domain occupies G4–V64.

The protein localises to the cytoplasm. The protein is Major cold shock protein (cspA) of Micrococcus luteus (strain ATCC 4698 / DSM 20030 / JCM 1464 / CCM 169 / CCUG 5858 / IAM 1056 / NBRC 3333 / NCIMB 9278 / NCTC 2665 / VKM Ac-2230) (Micrococcus lysodeikticus).